Here is a 291-residue protein sequence, read N- to C-terminus: ATP synthase gamma chain (291 aa).

The protein belongs to the ATPase gamma chain family. F-type ATPases have 2 components, CF(1) - the catalytic core - and CF(0) - the membrane proton channel. CF(1) has five subunits: alpha(3), beta(3), gamma(1), delta(1), epsilon(1). CF(0) has three main subunits: a, b and c.

The protein localises to the cell inner membrane. Its function is as follows. Produces ATP from ADP in the presence of a proton gradient across the membrane. The gamma chain is believed to be important in regulating ATPase activity and the flow of protons through the CF(0) complex. In Cupriavidus necator (strain ATCC 17699 / DSM 428 / KCTC 22496 / NCIMB 10442 / H16 / Stanier 337) (Ralstonia eutropha), this protein is ATP synthase gamma chain.